A 586-amino-acid polypeptide reads, in one-letter code: Proteasome-associated ATPase (586 aa).

The stretch at 11 to 76 (AWRELEAVRA…LREEVDRLGQ (66 aa)) forms a coiled coil. 273–278 (GCGKTL) lines the ATP pocket. Residues 585–586 (YL) are docks into pockets in the proteasome alpha-ring.

Belongs to the AAA ATPase family. Homohexamer. Assembles into a hexameric ring structure that caps the 20S proteasome core. Strongly interacts with the prokaryotic ubiquitin-like protein Pup through a hydrophobic interface; the interacting region of ARC lies in its N-terminal coiled-coil domain. There is one Pup binding site per ARC hexamer ring. Upon ATP-binding, the C-terminus of ARC interacts with the alpha-rings of the proteasome core, possibly by binding to the intersubunit pockets.

Its pathway is protein degradation; proteasomal Pup-dependent pathway. Functionally, ATPase which is responsible for recognizing, binding, unfolding and translocation of pupylated proteins into the bacterial 20S proteasome core particle. May be essential for opening the gate of the 20S proteasome via an interaction with its C-terminus, thereby allowing substrate entry and access to the site of proteolysis. Thus, the C-termini of the proteasomal ATPase may function like a 'key in a lock' to induce gate opening and therefore regulate proteolysis. The polypeptide is Proteasome-associated ATPase (Nocardia farcinica (strain IFM 10152)).